The primary structure comprises 457 residues: Probable xyloglucan 6-xylosyltransferase 5 (457 aa).

The interval 1–40 (MGQDGSPAHKRPSGSGGGLPTTTLTNGGGRGGRGGLLPRG) is disordered. At 1 to 51 (MGQDGSPAHKRPSGSGGGLPTTTLTNGGGRGGRGGLLPRGRQMQKTFNNIK) the chain is on the cytoplasmic side. Over residues 26 to 37 (NGGGRGGRGGLL) the composition is skewed to gly residues. Residues 52 to 72 (ITILCGFVTILVLRGTIGVGN) form a helical; Signal-anchor for type II membrane protein membrane-spanning segment. At 73–457 (LGSSSADAVN…RTPVETKPQN (385 aa)) the chain is on the lumenal side. The segment at 97-116 (RSDSDPTDLDEPQEGDMNPN) is disordered. The span at 101–110 (DPTDLDEPQE) shows a compositional bias: acidic residues. N-linked (GlcNAc...) asparagine glycans are attached at residues asparagine 116 and asparagine 432.

The protein belongs to the glycosyltransferase 34 family. Interacts with XXT2 and CSLC4. Interacts with FUT1 and XLT2. In terms of tissue distribution, highly expressed in roots, stems and cauline leaves, and at lower levels in rosette leaves, flowers and siliques.

The protein resides in the golgi apparatus membrane. The enzyme catalyses Transfers an alpha-D-xylosyl residue from UDP-D-xylose to a glucose residue in xyloglucan, forming an alpha-(1-&gt;6)-D-xylosyl-D-glucose linkage.. In terms of biological role, probable xyloglucan xylosyltransferase involved in the biosynthesis of xyloglucan in roots. May act in association with XXT1 and XXT2. Associates with other xyloglucan-synthesizing enzymes to form multiprotein complexes for xyloglucan synthesis in the Golgi. The protein is Probable xyloglucan 6-xylosyltransferase 5 of Arabidopsis thaliana (Mouse-ear cress).